Consider the following 274-residue polypeptide: NADPH-dependent 7-cyano-7-deazaguanine reductase (274 aa).

80 to 82 (VES) contributes to the substrate binding site. NADPH is bound at residue 82 to 83 (SK). The active-site Thioimide intermediate is the Cys-181. Catalysis depends on Asp-188, which acts as the Proton donor. Position 220–221 (220–221 (HE)) interacts with substrate. Residue 249-250 (RG) participates in NADPH binding.

This sequence belongs to the GTP cyclohydrolase I family. QueF type 2 subfamily. Homodimer.

It is found in the cytoplasm. The catalysed reaction is 7-aminomethyl-7-carbaguanine + 2 NADP(+) = 7-cyano-7-deazaguanine + 2 NADPH + 3 H(+). Its pathway is tRNA modification; tRNA-queuosine biosynthesis. Its function is as follows. Catalyzes the NADPH-dependent reduction of 7-cyano-7-deazaguanine (preQ0) to 7-aminomethyl-7-deazaguanine (preQ1). In Paraburkholderia phymatum (strain DSM 17167 / CIP 108236 / LMG 21445 / STM815) (Burkholderia phymatum), this protein is NADPH-dependent 7-cyano-7-deazaguanine reductase.